A 223-amino-acid polypeptide reads, in one-letter code: Triosephosphate isomerase (223 aa).

Position 10–12 (10–12 (NFK)) interacts with substrate. The Electrophile role is filled by histidine 94. Glutamate 142 functions as the Proton acceptor in the catalytic mechanism. Substrate contacts are provided by residues isoleucine 147, glycine 182, and 203 to 204 (AS).

The protein belongs to the triosephosphate isomerase family. Homotetramer; dimer of dimers.

Its subcellular location is the cytoplasm. It catalyses the reaction D-glyceraldehyde 3-phosphate = dihydroxyacetone phosphate. Its pathway is carbohydrate biosynthesis; gluconeogenesis. It participates in carbohydrate degradation; glycolysis; D-glyceraldehyde 3-phosphate from glycerone phosphate: step 1/1. Functionally, involved in the gluconeogenesis. Catalyzes stereospecifically the conversion of dihydroxyacetone phosphate (DHAP) to D-glyceraldehyde-3-phosphate (G3P). This chain is Triosephosphate isomerase, found in Archaeoglobus fulgidus (strain ATCC 49558 / DSM 4304 / JCM 9628 / NBRC 100126 / VC-16).